The primary structure comprises 347 residues: D-alanine--D-alanine ligase (347 aa).

Residues 138 to 339 (KILCSHAGIP…YSQVIETILA (202 aa)) form the ATP-grasp domain. Residue 171–226 (SDRFTFPLFVKPVDAGSSFGCTFVDFFEQLPVAIEHALQHGKSAIVEPALDAPEVF) participates in ATP binding. Residues aspartate 296, glutamate 308, and asparagine 310 each coordinate Mg(2+).

Belongs to the D-alanine--D-alanine ligase family. Mg(2+) serves as cofactor. The cofactor is Mn(2+).

The protein resides in the cytoplasm. It catalyses the reaction 2 D-alanine + ATP = D-alanyl-D-alanine + ADP + phosphate + H(+). Its pathway is cell wall biogenesis; peptidoglycan biosynthesis. In terms of biological role, cell wall formation. The chain is D-alanine--D-alanine ligase from Tropheryma whipplei (strain Twist) (Whipple's bacillus).